We begin with the raw amino-acid sequence, 380 residues long: Homoserine O-succinyltransferase (380 aa).

The AB hydrolase-1 domain occupies 51 to 362 (NAVLICHALS…SKHGHDAFLL (312 aa)). Ser-157 acts as the Nucleophile in catalysis. Position 227 (Arg-227) interacts with substrate. Residues Asp-324 and His-357 contribute to the active site. Asp-358 provides a ligand contact to substrate.

It belongs to the AB hydrolase superfamily. MetX family. As to quaternary structure, homodimer.

Its subcellular location is the cytoplasm. It catalyses the reaction L-homoserine + succinyl-CoA = O-succinyl-L-homoserine + CoA. It functions in the pathway amino-acid biosynthesis; L-methionine biosynthesis via de novo pathway; O-succinyl-L-homoserine from L-homoserine: step 1/1. In terms of biological role, transfers a succinyl group from succinyl-CoA to L-homoserine, forming succinyl-L-homoserine. This is Homoserine O-succinyltransferase from Cellvibrio japonicus (strain Ueda107) (Pseudomonas fluorescens subsp. cellulosa).